A 193-amino-acid polypeptide reads, in one-letter code: GTP cyclohydrolase 1 (193 aa).

Residues Cys73, His76, and Cys144 each coordinate Zn(2+).

The protein belongs to the GTP cyclohydrolase I family. Homomer.

The catalysed reaction is GTP + H2O = 7,8-dihydroneopterin 3'-triphosphate + formate + H(+). The protein operates within cofactor biosynthesis; 7,8-dihydroneopterin triphosphate biosynthesis; 7,8-dihydroneopterin triphosphate from GTP: step 1/1. In Hyperthermus butylicus (strain DSM 5456 / JCM 9403 / PLM1-5), this protein is GTP cyclohydrolase 1.